A 293-amino-acid chain; its full sequence is Elongation factor Ts (293 aa).

Residues 80 to 83 (TDFV) are involved in Mg(2+) ion dislocation from EF-Tu.

The protein belongs to the EF-Ts family.

It localises to the cytoplasm. In terms of biological role, associates with the EF-Tu.GDP complex and induces the exchange of GDP to GTP. It remains bound to the aminoacyl-tRNA.EF-Tu.GTP complex up to the GTP hydrolysis stage on the ribosome. The sequence is that of Elongation factor Ts from Burkholderia ambifaria (strain MC40-6).